The sequence spans 362 residues: Anthranilate phosphoribosyltransferase (362 aa).

Residues G96, 99–100, T104, 106–109, 124–132, and G136 contribute to the 5-phospho-alpha-D-ribose 1-diphosphate site; these read GD, NIST, and KHGNRAASS. G96 provides a ligand contact to anthranilate. S108 is a Mg(2+) binding site. N127 provides a ligand contact to anthranilate. An anthranilate-binding site is contributed by R182. Residues D240 and E241 each coordinate Mg(2+).

Belongs to the anthranilate phosphoribosyltransferase family. As to quaternary structure, homodimer. It depends on Mg(2+) as a cofactor.

It carries out the reaction N-(5-phospho-beta-D-ribosyl)anthranilate + diphosphate = 5-phospho-alpha-D-ribose 1-diphosphate + anthranilate. It functions in the pathway amino-acid biosynthesis; L-tryptophan biosynthesis; L-tryptophan from chorismate: step 2/5. In terms of biological role, catalyzes the transfer of the phosphoribosyl group of 5-phosphorylribose-1-pyrophosphate (PRPP) to anthranilate to yield N-(5'-phosphoribosyl)-anthranilate (PRA). In Rhodococcus opacus (strain B4), this protein is Anthranilate phosphoribosyltransferase.